The chain runs to 567 residues: MNLFRKISEKLKSYEDWVTEANYYLDEGIYDKAVECYLKALEKKNTNPIDWFNLAYALYHLEKYDSALEAINEALKISPSNIYFAYLKGLIHYKRGEIILAYKYLKKASEKIKNEELFEILGDISVKYGRYEEALKYYLKSYKMANSKNLNALFKAGKIYLLFGDIDKAYDAFNEILQQNPSHECKKIVECMENVVNAINSYEDLNNGLTMIKNKDYIGALKIFNKVLQIDENSDISYYYKSVIAEIFEEYKKALEYIDKSISIFNRSLYYAKKGDILYKLGDEEGAIEAYNKAIKLNSQNPYAYFGLAILYYRKGELEKSSNFFDKVLETYLEELSEEDISALNLYSLIGKAETTGIPKYYHEAMKYVDNLINLENSSRWWYVKGYIYYKLGNYKDAYESFMNALRVNPKDISTLKSLAIVLEKSGKIDEAITTYTKILKIVNSLQFTCEIDNILEKLRSRKPTNLEIPSVLFDIPVMYHKPNITCFYASNLWKYMANNNPIGAYIYLSFIESYISLDEISQMVNDIKSKLSLEMYRYCELIDDYKSDESVLMQIKELLQKLGCML.

TPR repeat units lie at residues tyrosine 14 to asparagine 47, proline 48 to asparagine 81, tyrosine 83 to glutamate 115, glutamate 116 to lysine 148, leucine 150 to histidine 183, isoleucine 199 to serine 234, isoleucine 236 to serine 268, leucine 269 to asparagine 301, tyrosine 303 to glutamate 335, leucine 344 to serine 379, arginine 380 to aspartate 412, serine 414 to leucine 446, and alanine 505 to arginine 538.

The chain is TPR repeat-containing protein MJ1428 from Methanocaldococcus jannaschii (strain ATCC 43067 / DSM 2661 / JAL-1 / JCM 10045 / NBRC 100440) (Methanococcus jannaschii).